The primary structure comprises 464 residues: CD-NTase-associated protein 4 (464 aa).

The segment at 1-228 (MSASLLEKQS…FENFICHALE (228 aa)) is N-terminal endonuclease domain. Residues 229 to 464 (EDRTQWLSDP…EYMPTAELNI (236 aa)) are C-terminal SAVED domain.

The protein belongs to the Cap4 nuclease family. In terms of assembly, a monomer in the absence of cAAA, in its presence it forms oligomers.

Its activity is regulated as follows. DNase activity is activated upon ligand binding. Its function is as follows. Effector DNase of a CBASS antivirus system. CBASS (cyclic oligonucleotide-based antiphage signaling system) provides immunity against bacteriophage. The CD-NTase protein synthesizes cyclic nucleotides in response to infection; these serve as specific second messenger signals. The signals activate a diverse range of effectors, leading to bacterial cell death and thus abortive phage infection. A type II-C CBASS system. Functionally, probably in the presence of its endogenous cyclic nucleotide (synthesized by the cognate CD-NTase protein in the CBASS operon), or of 2',3',3'-cyclic AMP-AMP-AMP (cAAA) synthesized by Acinetobacter sp. ATCC 27244, endonucleolytically degrades dsDNA in a non-sequence specific manner. It is not activated by other cyclic nucleotides. The protein is CD-NTase-associated protein 4 of Moraxella osloensis.